Here is a 561-residue protein sequence, read N- to C-terminus: DNA ligase B (561 aa).

The active-site N6-AMP-lysine intermediate is the Lys-125.

It belongs to the NAD-dependent DNA ligase family. LigB subfamily.

It catalyses the reaction NAD(+) + (deoxyribonucleotide)n-3'-hydroxyl + 5'-phospho-(deoxyribonucleotide)m = (deoxyribonucleotide)n+m + AMP + beta-nicotinamide D-nucleotide.. Catalyzes the formation of phosphodiester linkages between 5'-phosphoryl and 3'-hydroxyl groups in double-stranded DNA using NAD as a coenzyme and as the energy source for the reaction. This chain is DNA ligase B, found in Salmonella gallinarum (strain 287/91 / NCTC 13346).